The primary structure comprises 370 residues: Aminomethyltransferase (370 aa).

It belongs to the GcvT family. As to quaternary structure, the glycine cleavage system is composed of four proteins: P, T, L and H.

The catalysed reaction is N(6)-[(R)-S(8)-aminomethyldihydrolipoyl]-L-lysyl-[protein] + (6S)-5,6,7,8-tetrahydrofolate = N(6)-[(R)-dihydrolipoyl]-L-lysyl-[protein] + (6R)-5,10-methylene-5,6,7,8-tetrahydrofolate + NH4(+). In terms of biological role, the glycine cleavage system catalyzes the degradation of glycine. In Clostridium botulinum (strain Loch Maree / Type A3), this protein is Aminomethyltransferase.